The sequence spans 317 residues: 4-hydroxy-3-methylbut-2-enyl diphosphate reductase (317 aa).

Cys-12 serves as a coordination point for [4Fe-4S] cluster. 2 residues coordinate (2E)-4-hydroxy-3-methylbut-2-enyl diphosphate: His-43 and His-81. Residues His-43 and His-81 each contribute to the dimethylallyl diphosphate site. 2 residues coordinate isopentenyl diphosphate: His-43 and His-81. Residue Cys-103 participates in [4Fe-4S] cluster binding. His-131 contacts (2E)-4-hydroxy-3-methylbut-2-enyl diphosphate. Residue His-131 coordinates dimethylallyl diphosphate. Position 131 (His-131) interacts with isopentenyl diphosphate. The active-site Proton donor is Glu-133. Thr-172 is a binding site for (2E)-4-hydroxy-3-methylbut-2-enyl diphosphate. Residue Cys-200 participates in [4Fe-4S] cluster binding. (2E)-4-hydroxy-3-methylbut-2-enyl diphosphate-binding residues include Ser-228, Asn-230, and Ser-273. Dimethylallyl diphosphate-binding residues include Ser-228, Asn-230, and Ser-273. The isopentenyl diphosphate site is built by Ser-228, Asn-230, and Ser-273.

The protein belongs to the IspH family. [4Fe-4S] cluster is required as a cofactor.

It carries out the reaction isopentenyl diphosphate + 2 oxidized [2Fe-2S]-[ferredoxin] + H2O = (2E)-4-hydroxy-3-methylbut-2-enyl diphosphate + 2 reduced [2Fe-2S]-[ferredoxin] + 2 H(+). The catalysed reaction is dimethylallyl diphosphate + 2 oxidized [2Fe-2S]-[ferredoxin] + H2O = (2E)-4-hydroxy-3-methylbut-2-enyl diphosphate + 2 reduced [2Fe-2S]-[ferredoxin] + 2 H(+). Its pathway is isoprenoid biosynthesis; dimethylallyl diphosphate biosynthesis; dimethylallyl diphosphate from (2E)-4-hydroxy-3-methylbutenyl diphosphate: step 1/1. The protein operates within isoprenoid biosynthesis; isopentenyl diphosphate biosynthesis via DXP pathway; isopentenyl diphosphate from 1-deoxy-D-xylulose 5-phosphate: step 6/6. Its function is as follows. Catalyzes the conversion of 1-hydroxy-2-methyl-2-(E)-butenyl 4-diphosphate (HMBPP) into a mixture of isopentenyl diphosphate (IPP) and dimethylallyl diphosphate (DMAPP). Acts in the terminal step of the DOXP/MEP pathway for isoprenoid precursor biosynthesis. This Exiguobacterium sp. (strain ATCC BAA-1283 / AT1b) protein is 4-hydroxy-3-methylbut-2-enyl diphosphate reductase.